Reading from the N-terminus, the 64-residue chain is Conotoxin VnMLCL-042 (64 aa).

The first 19 residues, 1 to 19, serve as a signal peptide directing secretion; the sequence is MLCLPVFIILLLLASPAAP. Residues 20–43 constitute a propeptide that is removed on maturation; it reads NPLQTRIQSNLIRAGPEDANMKTD. Met63 bears the Methionine amide mark.

The protein belongs to the conotoxin T superfamily. In terms of tissue distribution, expressed by the venom duct.

It localises to the secreted. This Conus ventricosus (Mediterranean cone) protein is Conotoxin VnMLCL-042.